Consider the following 738-residue polypeptide: Protein Aster-B (738 aa).

Residues 1–81 (MKGFKLSCTA…SGGKNSKKSQ (81 aa)) are disordered. Positions 8-19 (CTASNSNRSTPA) are enriched in polar residues. 2 positions are modified to phosphoserine: Ser-28 and Ser-30. Residues 41–51 (MVEKGSDHSSD) show a composition bias toward basic and acidic residues. Over residues 59-70 (QGVQRSCSSQSG) the composition is skewed to low complexity. The region spanning 96-163 (EDFRKLFKQL…KDICSMTKEK (68 aa)) is the GRAM domain. The interval 254–301 (EENEVNDSSSKSSIETKPDASPQLPKKSITNSTLTSTGSSEAPVSFDG) is disordered. Over residues 259 to 268 (NDSSSKSSIE) the composition is skewed to polar residues. Phosphoserine is present on Ser-274. The segment covering 281–295 (SITNSTLTSTGSSEA) has biased composition (polar residues). The region spanning 372-543 (SGRQYVNEVF…ELAKTESTYL (172 aa)) is the VASt domain. Position 389 is a phosphotyrosine (Tyr-389). Positions 544 to 566 (AEMHRQSPKEKASKTTTVRRRKR) are disordered. A compositionally biased stretch (basic and acidic residues) spans 545–556 (EMHRQSPKEKAS). 2 positions are modified to phosphoserine: Ser-550 and Ser-581. Phosphothreonine occurs at positions 584, 585, and 587. The helical transmembrane segment at 623–643 (LLLVISCVICFSLVLLVILNM) threads the bilayer.

Its subcellular location is the endoplasmic reticulum membrane. It localises to the cell membrane. Its function is as follows. Cholesterol transporter that mediates non-vesicular transport of cholesterol from the plasma membrane (PM) to the endoplasmic reticulum (ER). Contains unique domains for binding cholesterol and the PM, thereby serving as a molecular bridge for the transfer of cholesterol from the PM to the ER. Plays a crucial role in cholesterol homeostasis in the adrenal gland and has the unique ability to localize to the PM based on the level of membrane cholesterol. In lipid-poor conditions localizes to the ER membrane and in response to excess cholesterol in the PM is recruited to the endoplasmic reticulum-plasma membrane contact sites (EPCS) which is mediated by the GRAM domain. At the EPCS, the sterol-binding VASt/ASTER domain binds to the cholesterol in the PM and facilitates its transfer from the PM to ER. This is Protein Aster-B (GRAMD1B) from Homo sapiens (Human).